The sequence spans 76 residues: uORF2 protein (76 aa).

Plays a role in viral replication. The protein is uORF2 protein of Homo sapiens (Human).